Here is a 416-residue protein sequence, read N- to C-terminus: D-amino acid dehydrogenase (416 aa).

3–17 (VTILGAGVIGVTTAY) contacts FAD.

This sequence belongs to the DadA oxidoreductase family. FAD serves as cofactor.

It catalyses the reaction a D-alpha-amino acid + A + H2O = a 2-oxocarboxylate + AH2 + NH4(+). Its pathway is amino-acid degradation; D-alanine degradation; NH(3) and pyruvate from D-alanine: step 1/1. Oxidative deamination of D-amino acids. The chain is D-amino acid dehydrogenase from Rhizobium rhizogenes (strain K84 / ATCC BAA-868) (Agrobacterium radiobacter).